A 210-amino-acid polypeptide reads, in one-letter code: Proteasome subunit beta (210 aa).

Residues Met1 to Gly9 constitute a propeptide, removed in mature form; by autocatalysis. Thr10 acts as the Nucleophile in catalysis.

The protein belongs to the peptidase T1B family. The 20S proteasome core is composed of 14 alpha and 14 beta subunits that assemble into four stacked heptameric rings, resulting in a barrel-shaped structure. The two inner rings, each composed of seven catalytic beta subunits, are sandwiched by two outer rings, each composed of seven alpha subunits. The catalytic chamber with the active sites is on the inside of the barrel. Has a gated structure, the ends of the cylinder being occluded by the N-termini of the alpha-subunits. Is capped at one or both ends by the proteasome regulatory ATPase, PAN.

The protein localises to the cytoplasm. The enzyme catalyses Cleavage of peptide bonds with very broad specificity.. With respect to regulation, the formation of the proteasomal ATPase PAN-20S proteasome complex, via the docking of the C-termini of PAN into the intersubunit pockets in the alpha-rings, triggers opening of the gate for substrate entry. Interconversion between the open-gate and close-gate conformations leads to a dynamic regulation of the 20S proteasome proteolysis activity. Its function is as follows. Component of the proteasome core, a large protease complex with broad specificity involved in protein degradation. In Methanothermobacter thermautotrophicus (strain ATCC 29096 / DSM 1053 / JCM 10044 / NBRC 100330 / Delta H) (Methanobacterium thermoautotrophicum), this protein is Proteasome subunit beta.